Consider the following 184-residue polypeptide: Oocyte-secreted protein 4A (184 aa).

Positions 1–19 (MKISCVLGKLLMLFELIHG) are cleaved as a signal peptide. N-linked (GlcNAc...) asparagine glycosylation is present at Asn-128.

The protein belongs to the PLAC1 family.

Its subcellular location is the secreted. The sequence is that of Oocyte-secreted protein 4A from Homo sapiens (Human).